Reading from the N-terminus, the 794-residue chain is Copper amine oxidase-like protein cao2 (794 aa).

Substrate contacts are provided by residues 307 to 318 and 391 to 396; these read AYDLGEYGVGYR and AANYEY. Residue aspartate 309 is the Proton acceptor of the active site. Residue tyrosine 394 is the Schiff-base intermediate with substrate; via topaquinone of the active site. The residue at position 394 (tyrosine 394) is a 2',4',5'-topaquinone. Positions 445 and 447 each coordinate Cu cation. The segment at 563–584 is disordered; the sequence is GDYAPQASDDTPKGLSKWISDD. The Mn(2+) site is built by aspartate 593 and isoleucine 594. A Cu cation-binding site is contributed by histidine 604. Positions 634-748 are disordered; it reads ALDTSSSVNS…NGGHHHHHHH (115 aa). The span at 637-649 shows a compositional bias: low complexity; it reads TSSSVNSTSEATS. The span at 652 to 714 shows a compositional bias: basic and acidic residues; the sequence is THHENLRDTS…DAAQKHEGRS (63 aa). The span at 716 to 727 shows a compositional bias: polar residues; the sequence is TLAQPGQQNANQ.

The protein belongs to the copper/topaquinone oxidase family. In terms of assembly, homodimer. It depends on Cu cation as a cofactor. Requires Zn(2+) as cofactor. The cofactor is L-topaquinone. Mn(2+) is required as a cofactor. Post-translationally, topaquinone (TPQ) is generated by copper-dependent autoxidation of a specific tyrosyl residue.

Its subcellular location is the cytoplasm. The enzyme catalyses a primary methyl amine + O2 + H2O = an aldehyde + H2O2 + NH4(+). Its function is as follows. Copper amine oxidase-like protein that does not show any copper amine oxidase activity. May be the appropriate amine substrate for cao2 has not been identified yet. This is Copper amine oxidase-like protein cao2 (cao2) from Schizosaccharomyces pombe (strain 972 / ATCC 24843) (Fission yeast).